The primary structure comprises 169 residues: Transcription antitermination protein NusB (169 aa).

The segment at 1 to 20 (MAESSNKPFRGPVRANDRKA) is disordered.

It belongs to the NusB family.

In terms of biological role, involved in transcription antitermination. Required for transcription of ribosomal RNA (rRNA) genes. Binds specifically to the boxA antiterminator sequence of the ribosomal RNA (rrn) operons. This Bradyrhizobium sp. (strain BTAi1 / ATCC BAA-1182) protein is Transcription antitermination protein NusB.